Reading from the N-terminus, the 482-residue chain is DnaJ protein P58IPK homolog (482 aa).

An N-terminal signal peptide occupies residues 1–42; the sequence is MDLFRVWSGMDFLAWRGMAYTLLLLNFVFACQLLLLQPLVSA. TPR repeat units lie at residues 50–83, 85–117, 130–164, 166–198, 199–232, 245–278, 283–316, and 318–350; these read AAELFERASQSIKVKRYSDALDDLNAAIEADPAL, EAYFKRASVLRHFCRYEDSENSYQKYLEFKSGD, AKSALETASTLYESKDIAKALEFVDKVVLVFSPAC, KAKLLKVKLLMVSKDYSGAISETGYILKEDENN, LEALLLRGRAYYYLADHDIAQRHYQKGLRLDPEH, LLKKTKSAEDNANKGKLRVSAEEYKEAIALDPEH, VHLYLGLCKVSVRLGRGKDGLNSCNEALNIDAEL, and EALHQRGEAKLLLEDWEGAVEDLKQAAQNSQDM. In terms of domain architecture, J spans 370-436; it reads DWYKILGISR…DKRARFDRGE (67 aa).

In terms of assembly, interacts with the helicase domain of the tobamovirus (TMV) and the tobacco etch virus (TEV) replicases. In terms of tissue distribution, expressed in flower buds and flowers.

It is found in the endoplasmic reticulum lumen. Its function is as follows. Plays an important positive role in viral symptom development and is required for viral multiplication and pathogenesis. This chain is DnaJ protein P58IPK homolog (P58IPK), found in Arabidopsis thaliana (Mouse-ear cress).